The following is a 308-amino-acid chain: General transcription factor IIH subunit 3 (308 aa).

The C4-type zinc finger occupies 268–285; the sequence is CSVCLSIFCNFSPICTTC.

This sequence belongs to the TFB4 family. In terms of assembly, part of a TFIID-containing RNA polymerase II pre-initiation complex that is composed of TBP and at least GTF2A1, GTF2A2, GTF2E1, GTF2E2, GTF2F1, GTF2H2, GTF2H3, GTF2H4, GTF2H5, GTF2B, TCEA1, ERCC2, ERCC3, TAF1, TAF2, TAF3, TAF4, TAF5, TAF6, TAF7, TAF8, TAF9, TAF10, TAF11, TAF12 and TAF13. Component of the 7-subunit TFIIH core complex composed of XPB/ERCC3, XPD/ERCC2, GTF2H1, GTF2H2, GTF2H3, GTF2H4 and GTF2H5, which is active in NER. The core complex associates with the 3-subunit CDK-activating kinase (CAK) module composed of CCNH/cyclin H, CDK7 and MNAT1 to form the 10-subunit holoenzyme (holo-TFIIH) active in transcription. Interacts with RARA; the interaction requires prior phosphorylation of RARA on 'Ser-369' which then enhances interaction of RARA with CDK7.

The protein resides in the nucleus. Functionally, component of the general transcription and DNA repair factor IIH (TFIIH) core complex, which is involved in general and transcription-coupled nucleotide excision repair (NER) of damaged DNA and, when complexed to CAK, in RNA transcription by RNA polymerase II. In NER, TFIIH acts by opening DNA around the lesion to allow the excision of the damaged oligonucleotide and its replacement by a new DNA fragment. In transcription, TFIIH has an essential role in transcription initiation. When the pre-initiation complex (PIC) has been established, TFIIH is required for promoter opening and promoter escape. Phosphorylation of the C-terminal tail (CTD) of the largest subunit of RNA polymerase II by the kinase module CAK controls the initiation of transcription. This is General transcription factor IIH subunit 3 (GTF2H3) from Homo sapiens (Human).